Consider the following 35-residue polypeptide: MSDIN-like toxin proprotein 1 (35 aa).

The propeptide occupies 1 to 10 (MSDINATRLP). Residues 11-20 (IIIVLGLIIP) constitute a cross-link (cyclopeptide (Ile-Pro)). A propeptide spanning residues 21–35 (LCVSDIEMILTRGER) is cleaved from the precursor.

It belongs to the MSDIN fungal toxin family. In terms of processing, processed by the macrocyclase-peptidase enzyme POPB to yield a toxic cyclic decapeptide. POPB first removes 10 residues from the N-terminus. Conformational trapping of the remaining peptide forces the enzyme to release this intermediate rather than proceed to macrocyclization. The enzyme rebinds the remaining peptide in a different conformation and catalyzes macrocyclization of the N-terminal 10 residues.

Its function is as follows. Probable toxin that belongs to the MSDIN-like toxin family responsible for a large number of food poisoning cases and deaths. The polypeptide is MSDIN-like toxin proprotein 1 (Amanita rimosa).